We begin with the raw amino-acid sequence, 125 residues long: Holo-[acyl-carrier-protein] synthase (125 aa).

Residues aspartate 8 and glutamate 57 each coordinate Mg(2+).

This sequence belongs to the P-Pant transferase superfamily. AcpS family. Mg(2+) serves as cofactor.

It localises to the cytoplasm. The enzyme catalyses apo-[ACP] + CoA = holo-[ACP] + adenosine 3',5'-bisphosphate + H(+). Functionally, transfers the 4'-phosphopantetheine moiety from coenzyme A to a Ser of acyl-carrier-protein. This is Holo-[acyl-carrier-protein] synthase from Geotalea daltonii (strain DSM 22248 / JCM 15807 / FRC-32) (Geobacter daltonii).